The sequence spans 165 residues: Methylated-DNA--protein-cysteine methyltransferase, constitutive (165 aa).

The active-site Nucleophile; methyl group acceptor is C130.

Belongs to the MGMT family.

The protein localises to the cytoplasm. The enzyme catalyses a 6-O-methyl-2'-deoxyguanosine in DNA + L-cysteinyl-[protein] = S-methyl-L-cysteinyl-[protein] + a 2'-deoxyguanosine in DNA. The catalysed reaction is a 4-O-methyl-thymidine in DNA + L-cysteinyl-[protein] = a thymidine in DNA + S-methyl-L-cysteinyl-[protein]. Functionally, involved in the cellular defense against the biological effects of O6-methylguanine (O6-MeG) and O4-methylthymine (O4-MeT) in DNA. Repairs the methylated nucleobase in DNA by stoichiometrically transferring the methyl group to a cysteine residue in the enzyme. This is a suicide reaction: the enzyme is irreversibly inactivated. The chain is Methylated-DNA--protein-cysteine methyltransferase, constitutive from Bacillus subtilis (strain 168).